A 141-amino-acid polypeptide reads, in one-letter code: Large ribosomal subunit protein bL17 (141 aa).

The protein belongs to the bacterial ribosomal protein bL17 family. Part of the 50S ribosomal subunit. Contacts protein L32.

This Sinorhizobium medicae (strain WSM419) (Ensifer medicae) protein is Large ribosomal subunit protein bL17.